The chain runs to 283 residues: MQVFHHIRSLREALAAERRAGKRIGFVPTMGNLHDAHIELVRIAQRNCDVVVTSIFVNPLQFGLNEDWDKYPRTLAADSAKLEAVHCDYLFCPDETEIYPNGMAEQTRVIVPTMIDVLCGASRPGHFEGVTTVVTKLFNIVQPDEAVFGVKDFQQLAVIRRMVQDLCIPVKIVAGDIVREPDGLAMSSRNGFITADERPHVAVLNRVLNGIKQQIEQGSRDFGTLAAEARAHIDAAGFRVDYVSICNSRTLEMAAHDDREITILGAMYTSGARLIDNVSVVLA.

Position 30–37 (30–37 (MGNLHDAH)) interacts with ATP. The active-site Proton donor is H37. A (R)-pantoate-binding site is contributed by Q61. Q61 contacts beta-alanine. 149–152 (GVKD) contributes to the ATP binding site. Q155 is a (R)-pantoate binding site. Residues V178 and 186–189 (MSSR) each bind ATP.

The protein belongs to the pantothenate synthetase family. Homodimer.

It localises to the cytoplasm. It catalyses the reaction (R)-pantoate + beta-alanine + ATP = (R)-pantothenate + AMP + diphosphate + H(+). It functions in the pathway cofactor biosynthesis; (R)-pantothenate biosynthesis; (R)-pantothenate from (R)-pantoate and beta-alanine: step 1/1. Its function is as follows. Catalyzes the condensation of pantoate with beta-alanine in an ATP-dependent reaction via a pantoyl-adenylate intermediate. The chain is Pantothenate synthetase from Cellvibrio japonicus (strain Ueda107) (Pseudomonas fluorescens subsp. cellulosa).